We begin with the raw amino-acid sequence, 295 residues long: 4-diphosphocytidyl-2-C-methyl-D-erythritol kinase (295 aa).

Lys-22 is an active-site residue. 106–116 (PAGGGFGGGSS) is an ATP binding site. Asp-148 is an active-site residue.

This sequence belongs to the GHMP kinase family. IspE subfamily.

It carries out the reaction 4-CDP-2-C-methyl-D-erythritol + ATP = 4-CDP-2-C-methyl-D-erythritol 2-phosphate + ADP + H(+). It participates in isoprenoid biosynthesis; isopentenyl diphosphate biosynthesis via DXP pathway; isopentenyl diphosphate from 1-deoxy-D-xylulose 5-phosphate: step 3/6. In terms of biological role, catalyzes the phosphorylation of the position 2 hydroxy group of 4-diphosphocytidyl-2C-methyl-D-erythritol. This is 4-diphosphocytidyl-2-C-methyl-D-erythritol kinase from Xanthomonas axonopodis pv. citri (strain 306).